Consider the following 250-residue polypeptide: MKKLMAANWKMYKTPQEAALTAGELVKAVGTVPDDREVLVFPPFVGLAQVAQAFSGVAGFYCGAQNVYPADEGAYTGEISPGMIVSTGAAWALTGHSERRSVLGESSAFVGQKTAFCLEKGLNVVLCIGETLEEREGGQLEKVLRGQLSEGLSGVPAGIAPERLAIAYEPVWAIGTGKVAGTAEIAATHAVVRGMLRELLPAAADSMRILYGGSVKPDNAAAIISLDNVDGVLVGGASLQAESFSRIILA.

Residue 8-10 participates in substrate binding; the sequence is NWK. Histidine 96 functions as the Electrophile in the catalytic mechanism. The active-site Proton acceptor is the glutamate 169. Substrate contacts are provided by residues glycine 175, serine 214, and 235-236; that span reads GG.

The protein belongs to the triosephosphate isomerase family. In terms of assembly, homodimer.

It localises to the cytoplasm. It catalyses the reaction D-glyceraldehyde 3-phosphate = dihydroxyacetone phosphate. It participates in carbohydrate biosynthesis; gluconeogenesis. The protein operates within carbohydrate degradation; glycolysis; D-glyceraldehyde 3-phosphate from glycerone phosphate: step 1/1. Functionally, involved in the gluconeogenesis. Catalyzes stereospecifically the conversion of dihydroxyacetone phosphate (DHAP) to D-glyceraldehyde-3-phosphate (G3P). The polypeptide is Triosephosphate isomerase (Oleidesulfovibrio alaskensis (strain ATCC BAA-1058 / DSM 17464 / G20) (Desulfovibrio alaskensis)).